A 282-amino-acid polypeptide reads, in one-letter code: Pantothenate synthetase (282 aa).

26–33 (MGNLHDGH) contacts ATP. H33 (proton donor) is an active-site residue. Q57 is a (R)-pantoate binding site. Beta-alanine is bound at residue Q57. Position 148 to 151 (148 to 151 (GKKD)) interacts with ATP. Q154 is a (R)-pantoate binding site. Residue 185 to 188 (LSSR) coordinates ATP.

The protein belongs to the pantothenate synthetase family. In terms of assembly, homodimer.

The protein resides in the cytoplasm. It catalyses the reaction (R)-pantoate + beta-alanine + ATP = (R)-pantothenate + AMP + diphosphate + H(+). It participates in cofactor biosynthesis; (R)-pantothenate biosynthesis; (R)-pantothenate from (R)-pantoate and beta-alanine: step 1/1. Catalyzes the condensation of pantoate with beta-alanine in an ATP-dependent reaction via a pantoyl-adenylate intermediate. The chain is Pantothenate synthetase from Polaromonas sp. (strain JS666 / ATCC BAA-500).